Consider the following 129-residue polypeptide: Ferredoxin-1 (129 aa).

The 2Fe-2S ferredoxin-type domain maps to 29–120; that stretch reads SDMDLDDEDY…EVKIVYNAKH (92 aa). [2Fe-2S] cluster-binding residues include Cys-64, Cys-69, Cys-72, and Cys-103.

It belongs to the 2Fe2S plant-type ferredoxin family. It depends on [2Fe-2S] cluster as a cofactor.

Its function is as follows. Ferredoxins are iron-sulfur proteins that transfer electrons in a wide variety of metabolic reactions. In Haloarcula marismortui (strain ATCC 43049 / DSM 3752 / JCM 8966 / VKM B-1809) (Halobacterium marismortui), this protein is Ferredoxin-1 (fer1).